Here is a 500-residue protein sequence, read N- to C-terminus: L-arabinose isomerase (500 aa).

Positions 306, 333, 350, and 450 each coordinate Mn(2+).

It belongs to the arabinose isomerase family. Homohexamer. Requires Mn(2+) as cofactor.

It carries out the reaction beta-L-arabinopyranose = L-ribulose. The protein operates within carbohydrate degradation; L-arabinose degradation via L-ribulose; D-xylulose 5-phosphate from L-arabinose (bacterial route): step 1/3. Catalyzes the conversion of L-arabinose to L-ribulose. In Escherichia coli (strain 55989 / EAEC), this protein is L-arabinose isomerase.